We begin with the raw amino-acid sequence, 313 residues long: 7,8-didemethyl-8-hydroxy-5-deazariboflavin synthase (313 aa).

The Radical SAM core domain maps to 4-235 (ITYSPAYTLV…AEITLQIPPN (232 aa)). [4Fe-4S] cluster contacts are provided by Cys18, Cys22, and Cys25.

Belongs to the radical SAM superfamily. CofG family. In terms of assembly, consists of two subunits, CofG and CofH. [4Fe-4S] cluster is required as a cofactor.

It carries out the reaction 5-amino-5-(4-hydroxybenzyl)-6-(D-ribitylimino)-5,6-dihydrouracil + S-adenosyl-L-methionine = 7,8-didemethyl-8-hydroxy-5-deazariboflavin + 5'-deoxyadenosine + L-methionine + NH4(+) + H(+). The protein operates within cofactor biosynthesis; coenzyme F0 biosynthesis. In terms of biological role, catalyzes the radical-mediated synthesis of 7,8-didemethyl-8-hydroxy-5-deazariboflavin from 5-amino-5-(4-hydroxybenzyl)-6-(D-ribitylimino)-5,6-dihydrouracil. In Synechocystis sp. (strain ATCC 27184 / PCC 6803 / Kazusa), this protein is 7,8-didemethyl-8-hydroxy-5-deazariboflavin synthase.